We begin with the raw amino-acid sequence, 297 residues long: Streptogrisin-A (297 aa).

Positions 1–38 (MTFKRFSPLSSTSRYARLLAVASGLVAAAALATPSAVA) are cleaved as a signal peptide. A propeptide spanning residues 39–115 (APEAESKATV…VKRAEGKFTP (77 aa)) is cleaved from the precursor. An intrachain disulfide couples cysteine 130 to cysteine 150. Active-site charge relay system residues include histidine 149, aspartate 171, and serine 253. Cysteine 247 and cysteine 274 are oxidised to a cystine.

Belongs to the peptidase S1 family. Monomer.

The enzyme catalyses Hydrolysis of proteins with specificity similar to chymotrypsin.. Its function is as follows. Has a primary specificity for large aliphatic or aromatic amino acids. This Streptomyces griseus protein is Streptogrisin-A (sprA).